The sequence spans 1073 residues: MRRELFIFLLLLGECANVKVKVGHIGAVGSMRNAEKILQLSKEQLTQEGVLGNDFDIEILNQMGCGESYEGVAVGADMYHVQGVRAFIGPYCNAELDAVAKMATFWNIPVVGYMASSNSFADKTIFKTLARVSLRTTNSLAEAAAALIKHYGWNKVAIATNTGAVAFERVQSFEEVFHQRGINVVRKIMLEEYTNAKAIMNSGLLQELENSARVVVCAFSSTRDMNKEFMQAVTLSGMNNANYAWILPWLQLETKDMAPWLGENGEYQQNVKDHFANSFIIDDVNGFDNTLVTPFKERLEASGYSTDDLEMKNIYGYIHLYDALRLYALAVRATMNETGNENSYLNGKEVWNHMRRITFPGLVSNAGVTSGTVMMDDIAERAPVYAAFYVPPNSDTVRKVCELEPVMLTNCDGTKTGNGCYELQVTDLSTGFWPSIDGSLPADEPACGFRNEKCDYTTLIIGGCIVLLIILLIICFFILSRVCENRALANTPWRIYRDDFRTIQENEMKSMLSIGSSKTKMSNMSMFVKHHAVVGTNTHASFHLYPQRRPIVFNRQDLQLLNQMKQAVHDNLNPFLGMSFNEKEEMVVLWKFCSRGTIQDMIYNQEVSLDSKFHGAFIRDITLGLEYLHSSIIGYHGSLTPWSCLIDRNWMIKLTDYGIANPLERWEKLGLISTETLKEGDDKSGSAQKTSLLYQPPEMLKNKESNRTRRMDQSWVKQSQARRQMGDIYAFGMVMHEILFRALPFPNGTNVSEVMDYIRDGTKTFRPTVHDRTQIHPDLVALLLDCWNENPEVRPSIRRVRLNTENYLKVKGSLVDQMMRMMEQYANNLEKLVAERTGMLEEANVRADKLLGQLLPKYVANELKMGRSVPAKTFDMATVMFSDIVGFTTICSSSTPLEVVSMLNSIYSKFDDAINKHGSYKVETIGDAYMIVSGIPEENGNEHIRNICNTALELMLLLKTYEIPHRRNVKLRIRLGIHTGTVAAGVVGLTAPRYCLFGDTVNVASRMESTSEPEKIQMSQEARDFCVRYYSEFQITLRGTVEAKGKGPVTSYWLLGKQSESQMQQQNFSQLGI.

The signal sequence occupies residues 1–15 (MRRELFIFLLLLGEC). Topologically, residues 16-458 (ANVKVKVGHI…FRNEKCDYTT (443 aa)) are extracellular. N-linked (GlcNAc...) asparagine glycosylation is present at N336. The chain crosses the membrane as a helical span at residues 459-479 (LIIGGCIVLLIILLIICFFIL). Residues 480-1073 (SRVCENRALA…QQQNFSQLGI (594 aa)) lie on the Cytoplasmic side of the membrane. The Protein kinase domain occupies 508-808 (MKSMLSIGSS…RVRLNTENYL (301 aa)). Residues 813 to 844 (SLVDQMMRMMEQYANNLEKLVAERTGMLEEAN) are a coiled coil. The Guanylate cyclase domain maps to 878–1008 (TVMFSDIVGF…DTVNVASRME (131 aa)). Mg(2+) is bound by residues D883, I884, and D927.

It belongs to the adenylyl cyclase class-4/guanylyl cyclase family. As to expression, expressed specifically in AFD sensory neurons.

It localises to the cell membrane. It is found in the cell projection. The protein localises to the cilium. The catalysed reaction is GTP = 3',5'-cyclic GMP + diphosphate. Functionally, guanylate cyclase involved in the production of the second messenger cGMP. Regulates thermotaxis responses in AFD sensory neurons. May regulate AFD neuronal activity such as calcium responses to temperature gradients. This is Receptor-type guanylate cyclase gcy-23 from Caenorhabditis elegans.